The chain runs to 513 residues: Leucine-rich repeat-containing protein 24 (513 aa).

Residues Met-1–Ala-20 form the signal peptide. The LRRNT domain occupies Ala-21–Pro-50. LRR repeat units follow at residues Gly-51–Pro-72, Ala-75–Ala-96, Arg-99–Gly-120, Gln-123–His-144, Arg-147–Gly-168, and Ser-171–Pro-192. The LRRCT domain occupies Asn-204–Pro-259. Residues Pro-260 to Leu-361 enclose the Ig-like C2-type domain. Cys-281 and Cys-345 form a disulfide bridge. Residues Asn-334 and Asn-363 are each glycosylated (N-linked (GlcNAc...) asparagine). Residues Ser-365–Ala-391 form a disordered region. A helical transmembrane segment spans residues Ala-406–Cys-426.

It is found in the membrane. This is Leucine-rich repeat-containing protein 24 (LRRC24) from Homo sapiens (Human).